A 1086-amino-acid chain; its full sequence is DNA polymerase (1086 aa).

The segment at 638-657 (STTRKPVDDVEEHSECNGFT) is disordered.

The protein belongs to the DNA polymerase type-B family.

It carries out the reaction DNA(n) + a 2'-deoxyribonucleoside 5'-triphosphate = DNA(n+1) + diphosphate. Functionally, replicates the viral genome. Host DNA polymerases cannot substitute for the viral enzyme in this process. This Noctuidae (owlet moths) protein is DNA polymerase.